Consider the following 223-residue polypeptide: Dephospho-CoA kinase (223 aa).

Positions 22–223 (LIGLSGPSCS…LLQEVKKRGF (202 aa)) constitute a DPCK domain. 30–35 (CSGKNT) lines the ATP pocket.

The protein belongs to the CoaE family.

It localises to the cytoplasm. It carries out the reaction 3'-dephospho-CoA + ATP = ADP + CoA + H(+). Its pathway is cofactor biosynthesis; coenzyme A biosynthesis; CoA from (R)-pantothenate: step 5/5. Catalyzes the phosphorylation of the 3'-hydroxyl group of dephosphocoenzyme A to form coenzyme A. This Treponema denticola (strain ATCC 35405 / DSM 14222 / CIP 103919 / JCM 8153 / KCTC 15104) protein is Dephospho-CoA kinase.